Here is a 219-residue protein sequence, read N- to C-terminus: Cytidylate kinase (219 aa).

Residue 10 to 18 (GPAAAGKST) participates in ATP binding.

This sequence belongs to the cytidylate kinase family. Type 1 subfamily.

The protein resides in the cytoplasm. It carries out the reaction CMP + ATP = CDP + ADP. It catalyses the reaction dCMP + ATP = dCDP + ADP. In Staphylococcus aureus (strain JH9), this protein is Cytidylate kinase.